Reading from the N-terminus, the 510-residue chain is MTDAVQNETVQEASAQEENKLIAERRAKLDAIRKSCKANGHPNDFRRDALAGDLQKEFGEKTKEELEELNHVVAIAGRIMAKRGPFLVIQETSGRIQAYADKAVQKVLKEKYQGLDIGDIIGVKGALHKSGKGDLYVNMEEFELLTKALRPLPEKFHGLTDQEMRYRQRYVDLIVNEDSRQAFVVRSKVMSAIRNFMITKQFMEVETPMMHVIPGGASARPFITHHNALDMPMYLRIAPELYLKRLVVGGFDRVFEINRNFRNEGLSPRHNPEFTMMEFYMAYADYKELMDLTEELLSSVALEVLGSTSMPYGDDTVEFGGTYTRMSMFEAIKHYNPDHAQIQALTEEDIQNRDLMVSIAKSVHVEVESFWTCGQLLEEIFGETAEPKLMQPTFITGYPADISPLARRSDDNPFFTDRFEFFIGGREVANGFSELNDAEDQDARFKAQVEAKESGDDEAMFYDADYITALEHGLPPTAGQGIGIDRLVMLLTNTHTIRDVILFPAMRPQA.

Residues Glu-420 and Glu-427 each coordinate Mg(2+).

This sequence belongs to the class-II aminoacyl-tRNA synthetase family. Homodimer. It depends on Mg(2+) as a cofactor.

It is found in the cytoplasm. It catalyses the reaction tRNA(Lys) + L-lysine + ATP = L-lysyl-tRNA(Lys) + AMP + diphosphate. The polypeptide is Lysine--tRNA ligase (Vibrio campbellii (strain ATCC BAA-1116)).